A 559-amino-acid polypeptide reads, in one-letter code: MKHSHLLQRCSAQLCTRGSSLILSLLLSVCLSVEGQYNGEKGISIPDHGYCQPISIPLCTDIAYNQTIMPNLLGHTNQEDAGLEVHQFYPLVKVQCSPELKFFLCSIYAPVCTVLEQALPPCRSLCDRARQGCEALMNKFGFQWPESLRCEKFPINGAGELCVGQNTTESGTPTPAVPETWTSNSRTYYRDKFMCPRALKVPAYVNYHFLGEKDCGAPCEVGKVHGLMYFAPEELNFARIWIGIWSVLCCASTLFTVLTYLVDMKRFSYPERPIIFLSGCYTMVAIAYIAGFLLEDKVVCNERFAEDGYKTVAQGTKKEGCTFLFMMLYFFSMASSIWWVILSLTWFLAAGMKWGHEAIEANSQYFHLAAWAVPAIKTITILAVGQVDGDTLSGVCFVGINNVDALRGFVLAPLFVYLFIGTSFLLAGFVSLFRIRTIMKHDGTKTEKLEKLMVRIGIFSVLYTVPATIVIACYFYEQAFREQWEKSWISQSCKTYAIPCPSTGHPPMSPDFTVFMIKYLMTLIVGITSGFWIWSGKTLNSWRKFYTRLTNSKQGETTV.

The N-terminal stretch at 1–35 (MKHSHLLQRCSAQLCTRGSSLILSLLLSVCLSVEG) is a signal peptide. Residues 36 to 239 (QYNGEKGISI…FAPEELNFAR (204 aa)) are Extracellular-facing. The region spanning 46-165 (PDHGYCQPIS…NGAGELCVGQ (120 aa)) is the FZ domain. Intrachain disulfides connect Cys51/Cys112, Cys59/Cys105, Cys96/Cys133, Cys122/Cys162, and Cys126/Cys150. Asn65 carries an N-linked (GlcNAc...) asparagine glycan. An N-linked (GlcNAc...) asparagine glycan is attached at Asn166. The chain crosses the membrane as a helical span at residues 240–260 (IWIGIWSVLCCASTLFTVLTY). Over 261-273 (LVDMKRFSYPERP) the chain is Cytoplasmic. The chain crosses the membrane as a helical span at residues 274 to 294 (IIFLSGCYTMVAIAYIAGFLL). Residues 295–321 (EDKVVCNERFAEDGYKTVAQGTKKEGC) are Extracellular-facing. Residues 322 to 342 (TFLFMMLYFFSMASSIWWVIL) traverse the membrane as a helical segment. The Cytoplasmic portion of the chain corresponds to 343 to 364 (SLTWFLAAGMKWGHEAIEANSQ). Residues 365–385 (YFHLAAWAVPAIKTITILAVG) form a helical membrane-spanning segment. The Extracellular segment spans residues 386 to 408 (QVDGDTLSGVCFVGINNVDALRG). Residues 409–429 (FVLAPLFVYLFIGTSFLLAGF) form a helical membrane-spanning segment. Topologically, residues 430 to 455 (VSLFRIRTIMKHDGTKTEKLEKLMVR) are cytoplasmic. Residues 456–476 (IGIFSVLYTVPATIVIACYFY) form a helical membrane-spanning segment. Residues 477-513 (EQAFREQWEKSWISQSCKTYAIPCPSTGHPPMSPDFT) lie on the Extracellular side of the membrane. The chain crosses the membrane as a helical span at residues 514 to 534 (VFMIKYLMTLIVGITSGFWIW). The Cytoplasmic segment spans residues 535 to 559 (SGKTLNSWRKFYTRLTNSKQGETTV). The short motif at 537–542 (KTLNSW) is the Lys-Thr-X-X-X-Trp motif, mediates interaction with the PDZ domain of Dvl family members element. The PDZ-binding motif lies at 557–559 (TTV).

The protein belongs to the G-protein coupled receptor Fz/Smo family. Interacts with wnt8. In terms of tissue distribution, in the embryo, expressed in the heart, pronephros and otic vesicles.

Its subcellular location is the cell membrane. In terms of biological role, receptor for Wnt proteins. Functions in the canonical Wnt/beta-catenin signaling pathway. The canonical Wnt/beta-catenin signaling pathway leads to the activation of disheveled proteins, inhibition of GSK-3 kinase, nuclear accumulation of beta-catenin and activation of Wnt target genes. A second signaling pathway involving PKC and calcium fluxes has been seen for some family members, but it is not yet clear if it represents a distinct pathway or if it can be integrated in the canonical pathway, as PKC seems to be required for Wnt-mediated inactivation of GSK-3 kinase. Both pathways seem to involve interactions with G-proteins. May be involved in transduction and intercellular transmission of polarity information during tissue morphogenesis and/or in differentiated tissues. This is Frizzled-1 (fzd1) from Xenopus laevis (African clawed frog).